The following is a 462-amino-acid chain: tRNA-2-methylthio-N(6)-dimethylallyladenosine synthase (462 aa).

The 116-residue stretch at 2-117 folds into the MTTase N-terminal domain; the sequence is KRYFIHTFGC…LPDIIGRVSA (116 aa). Residues Cys11, Cys47, Cys80, Cys157, Cys161, and Cys164 each contribute to the [4Fe-4S] cluster site. The Radical SAM core domain occupies 143 to 372; that stretch reads SRGKVTEFVT…QKLQRRISGE (230 aa). Positions 375 to 437 constitute a TRAM domain; sequence AALVGSEVEV…PNQLAGKQVA (63 aa).

The protein belongs to the methylthiotransferase family. MiaB subfamily. As to quaternary structure, monomer. The cofactor is [4Fe-4S] cluster.

The protein resides in the cytoplasm. The catalysed reaction is N(6)-dimethylallyladenosine(37) in tRNA + (sulfur carrier)-SH + AH2 + 2 S-adenosyl-L-methionine = 2-methylsulfanyl-N(6)-dimethylallyladenosine(37) in tRNA + (sulfur carrier)-H + 5'-deoxyadenosine + L-methionine + A + S-adenosyl-L-homocysteine + 2 H(+). In terms of biological role, catalyzes the methylthiolation of N6-(dimethylallyl)adenosine (i(6)A), leading to the formation of 2-methylthio-N6-(dimethylallyl)adenosine (ms(2)i(6)A) at position 37 in tRNAs that read codons beginning with uridine. In Myxococcus xanthus (strain DK1622), this protein is tRNA-2-methylthio-N(6)-dimethylallyladenosine synthase.